Here is a 157-residue protein sequence, read N- to C-terminus: ATP synthase subunit b 1 (157 aa).

Residues 7 to 29 (LFGQMVTFALLVWFTMKYVWPPL) traverse the membrane as a helical segment.

This sequence belongs to the ATPase B chain family. As to quaternary structure, F-type ATPases have 2 components, F(1) - the catalytic core - and F(0) - the membrane proton channel. F(1) has five subunits: alpha(3), beta(3), gamma(1), delta(1), epsilon(1). F(0) has three main subunits: a(1), b(2) and c(10-14). The alpha and beta chains form an alternating ring which encloses part of the gamma chain. F(1) is attached to F(0) by a central stalk formed by the gamma and epsilon chains, while a peripheral stalk is formed by the delta and b chains.

The protein localises to the cell inner membrane. F(1)F(0) ATP synthase produces ATP from ADP in the presence of a proton or sodium gradient. F-type ATPases consist of two structural domains, F(1) containing the extramembraneous catalytic core and F(0) containing the membrane proton channel, linked together by a central stalk and a peripheral stalk. During catalysis, ATP synthesis in the catalytic domain of F(1) is coupled via a rotary mechanism of the central stalk subunits to proton translocation. In terms of biological role, component of the F(0) channel, it forms part of the peripheral stalk, linking F(1) to F(0). The sequence is that of ATP synthase subunit b 1 from Methylococcus capsulatus (strain ATCC 33009 / NCIMB 11132 / Bath).